The sequence spans 163 residues: Nucleotide-binding protein RBAM_011030 (163 aa).

The protein belongs to the YajQ family.

In terms of biological role, nucleotide-binding protein. This is Nucleotide-binding protein RBAM_011030 from Bacillus velezensis (strain DSM 23117 / BGSC 10A6 / LMG 26770 / FZB42) (Bacillus amyloliquefaciens subsp. plantarum).